Reading from the N-terminus, the 374-residue chain is Queuine tRNA-ribosyltransferase (374 aa).

D89 functions as the Proton acceptor in the catalytic mechanism. Residues 89–93, D143, Q187, and G214 each bind substrate; that span reads DSGGF. An RNA binding region spans residues 245–251; it reads GVGKPED. The Nucleophile role is filled by D264. The segment at 269 to 273 is RNA binding; important for wobble base 34 recognition; the sequence is TRNAR. Zn(2+) contacts are provided by C302, C304, C307, and H333.

Belongs to the queuine tRNA-ribosyltransferase family. In terms of assembly, homodimer. Within each dimer, one monomer is responsible for RNA recognition and catalysis, while the other monomer binds to the replacement base PreQ1. The cofactor is Zn(2+).

The catalysed reaction is 7-aminomethyl-7-carbaguanine + guanosine(34) in tRNA = 7-aminomethyl-7-carbaguanosine(34) in tRNA + guanine. Its pathway is tRNA modification; tRNA-queuosine biosynthesis. Functionally, catalyzes the base-exchange of a guanine (G) residue with the queuine precursor 7-aminomethyl-7-deazaguanine (PreQ1) at position 34 (anticodon wobble position) in tRNAs with GU(N) anticodons (tRNA-Asp, -Asn, -His and -Tyr). Catalysis occurs through a double-displacement mechanism. The nucleophile active site attacks the C1' of nucleotide 34 to detach the guanine base from the RNA, forming a covalent enzyme-RNA intermediate. The proton acceptor active site deprotonates the incoming PreQ1, allowing a nucleophilic attack on the C1' of the ribose to form the product. After dissociation, two additional enzymatic reactions on the tRNA convert PreQ1 to queuine (Q), resulting in the hypermodified nucleoside queuosine (7-(((4,5-cis-dihydroxy-2-cyclopenten-1-yl)amino)methyl)-7-deazaguanosine). This Shewanella sp. (strain W3-18-1) protein is Queuine tRNA-ribosyltransferase.